The sequence spans 169 residues: S-ribosylhomocysteine lyase (169 aa).

Residues histidine 54, histidine 58, and cysteine 128 each coordinate Fe cation.

The protein belongs to the LuxS family. In terms of assembly, homodimer. The cofactor is Fe cation.

The catalysed reaction is S-(5-deoxy-D-ribos-5-yl)-L-homocysteine = (S)-4,5-dihydroxypentane-2,3-dione + L-homocysteine. Its function is as follows. Involved in the synthesis of autoinducer 2 (AI-2) which is secreted by bacteria and is used to communicate both the cell density and the metabolic potential of the environment. The regulation of gene expression in response to changes in cell density is called quorum sensing. Catalyzes the transformation of S-ribosylhomocysteine (RHC) to homocysteine (HC) and 4,5-dihydroxy-2,3-pentadione (DPD). This is S-ribosylhomocysteine lyase from Psychromonas ingrahamii (strain DSM 17664 / CCUG 51855 / 37).